The chain runs to 574 residues: 2-succinyl-5-enolpyruvyl-6-hydroxy-3-cyclohexene-1-carboxylate synthase (574 aa).

The protein belongs to the TPP enzyme family. MenD subfamily. In terms of assembly, homodimer. Requires Mg(2+) as cofactor. It depends on Mn(2+) as a cofactor. The cofactor is thiamine diphosphate.

The enzyme catalyses isochorismate + 2-oxoglutarate + H(+) = 5-enolpyruvoyl-6-hydroxy-2-succinyl-cyclohex-3-ene-1-carboxylate + CO2. It functions in the pathway quinol/quinone metabolism; 1,4-dihydroxy-2-naphthoate biosynthesis; 1,4-dihydroxy-2-naphthoate from chorismate: step 2/7. The protein operates within cofactor biosynthesis; phylloquinone biosynthesis. Its function is as follows. Catalyzes the thiamine diphosphate-dependent decarboxylation of 2-oxoglutarate and the subsequent addition of the resulting succinic semialdehyde-thiamine pyrophosphate anion to isochorismate to yield 2-succinyl-5-enolpyruvyl-6-hydroxy-3-cyclohexene-1-carboxylate (SEPHCHC). This chain is 2-succinyl-5-enolpyruvyl-6-hydroxy-3-cyclohexene-1-carboxylate synthase, found in Prochlorococcus marinus (strain SARG / CCMP1375 / SS120).